The sequence spans 458 residues: Type III intermediate filament (458 aa).

The segment at Met1–Glu100 is head. The region spanning Glu97–Ile405 is the IF rod domain. A tail region spans residues Ser406–Asp458.

It belongs to the intermediate filament family.

The protein is Type III intermediate filament of Tetronarce californica (Pacific electric ray).